Consider the following 182-residue polypeptide: Lipoprotein signal peptidase (182 aa).

The next 4 helical transmembrane spans lie at 15–35 (IYLGVIFLGIVLDLVTKFLVI), 44–64 (LEVFGSFFRMTLTFNTGFVFG), 65–85 (AFQDNAIPSLIATGVAIVFLI), and 97–117 (PWGWNLVMAGAFGNFLDKFFV). Catalysis depends on residues D140 and D162. Residues 155–175 (WPAFNVADSCVTIGLTILIFT) form a helical membrane-spanning segment.

The protein belongs to the peptidase A8 family.

It localises to the cell inner membrane. It carries out the reaction Release of signal peptides from bacterial membrane prolipoproteins. Hydrolyzes -Xaa-Yaa-Zaa-|-(S,diacylglyceryl)Cys-, in which Xaa is hydrophobic (preferably Leu), and Yaa (Ala or Ser) and Zaa (Gly or Ala) have small, neutral side chains.. The protein operates within protein modification; lipoprotein biosynthesis (signal peptide cleavage). Functionally, this protein specifically catalyzes the removal of signal peptides from prolipoproteins. The sequence is that of Lipoprotein signal peptidase from Leptospira interrogans serogroup Icterohaemorrhagiae serovar Lai (strain 56601).